Reading from the N-terminus, the 831-residue chain is Protein translocase subunit SecA (831 aa).

Residues glutamine 88, 106-110, and aspartate 495 each bind ATP; that span reads GEGKT. Residues cysteine 816, cysteine 818, cysteine 827, and cysteine 828 each coordinate Zn(2+).

It belongs to the SecA family. Monomer and homodimer. Part of the essential Sec protein translocation apparatus which comprises SecA, SecYEG and auxiliary proteins SecDF-YajC and YidC. Requires Zn(2+) as cofactor.

Its subcellular location is the cell membrane. It localises to the cytoplasm. The catalysed reaction is ATP + H2O + cellular proteinSide 1 = ADP + phosphate + cellular proteinSide 2.. Its function is as follows. Part of the Sec protein translocase complex. Interacts with the SecYEG preprotein conducting channel. Has a central role in coupling the hydrolysis of ATP to the transfer of proteins into and across the cell membrane, serving as an ATP-driven molecular motor driving the stepwise translocation of polypeptide chains across the membrane. This is Protein translocase subunit SecA from Lawsonia intracellularis (strain PHE/MN1-00).